Consider the following 800-residue polypeptide: Protein translocase subunit SecA (800 aa).

ATP-binding positions include Gln-85, 103-107, and Asp-504; that span reads GEGKT.

Belongs to the SecA family. As to quaternary structure, monomer and homodimer. Part of the essential Sec protein translocation apparatus which comprises SecA, SecYEG and auxiliary proteins SecDF. Other proteins may also be involved.

It localises to the cell membrane. The protein localises to the cytoplasm. It catalyses the reaction ATP + H2O + cellular proteinSide 1 = ADP + phosphate + cellular proteinSide 2.. In terms of biological role, part of the Sec protein translocase complex. Interacts with the SecYEG preprotein conducting channel. Has a central role in coupling the hydrolysis of ATP to the transfer of proteins into and across the cell membrane, serving as an ATP-driven molecular motor driving the stepwise translocation of polypeptide chains across the membrane. The sequence is that of Protein translocase subunit SecA from Lactobacillus delbrueckii subsp. bulgaricus (strain ATCC 11842 / DSM 20081 / BCRC 10696 / JCM 1002 / NBRC 13953 / NCIMB 11778 / NCTC 12712 / WDCM 00102 / Lb 14).